The chain runs to 74 residues: MIIPWQQIAPETLDSLIEAFVLREGTDYGEQERSLTQKVEDVRHQLKCGEAVVVWSELHESVNIMPRSQFNGVD.

It belongs to the UPF0270 family.

In Edwardsiella ictaluri (strain 93-146), this protein is UPF0270 protein NT01EI_3666.